A 144-amino-acid chain; its full sequence is Large ribosomal subunit protein uL15 (144 aa).

A disordered region spans residues 1–51 (MQLNTLSPAQGEKKSRKRVGRGIGSGIGKTCGSGHKGQKSRSGGFNKIGFE). The segment covering 21-35 (RGIGSGIGKTCGSGH) has biased composition (gly residues).

It belongs to the universal ribosomal protein uL15 family. In terms of assembly, part of the 50S ribosomal subunit.

Binds to the 23S rRNA. The sequence is that of Large ribosomal subunit protein uL15 from Vesicomyosocius okutanii subsp. Calyptogena okutanii (strain HA).